We begin with the raw amino-acid sequence, 183 residues long: Hypoxanthine/guanine phosphoribosyltransferase (183 aa).

Belongs to the purine/pyrimidine phosphoribosyltransferase family. Archaeal HPRT subfamily. Homodimer.

The protein localises to the cytoplasm. The catalysed reaction is IMP + diphosphate = hypoxanthine + 5-phospho-alpha-D-ribose 1-diphosphate. The enzyme catalyses GMP + diphosphate = guanine + 5-phospho-alpha-D-ribose 1-diphosphate. The protein operates within purine metabolism; IMP biosynthesis via salvage pathway; IMP from hypoxanthine: step 1/1. In terms of biological role, catalyzes a salvage reaction resulting in the formation of IMP that is energically less costly than de novo synthesis. The sequence is that of Hypoxanthine/guanine phosphoribosyltransferase from Methanocaldococcus jannaschii (strain ATCC 43067 / DSM 2661 / JAL-1 / JCM 10045 / NBRC 100440) (Methanococcus jannaschii).